A 358-amino-acid chain; its full sequence is Ion-translocating oxidoreductase complex subunit D (358 aa).

Transmembrane regions (helical) follow at residues 24–44 (ILAM…GVVL), 79–99 (LTAL…IIII), and 125–145 (IGYV…MPPI). An FMN phosphoryl threonine modification is found at threonine 186. The next 5 membrane-spanning stretches (helical) occupy residues 220 to 240 (FAQG…FLIL), 248 to 268 (IPVA…FTGF), 271 to 291 (LSAI…FIAT), 297 to 317 (SITP…VYLI), and 321 to 341 (GNYP…VPLI).

It belongs to the NqrB/RnfD family. As to quaternary structure, the complex is composed of six subunits: RnfA, RnfB, RnfC, RnfD, RnfE and RnfG. FMN is required as a cofactor.

It localises to the cell inner membrane. Its function is as follows. Part of a membrane-bound complex that couples electron transfer with translocation of ions across the membrane. This Haemophilus influenzae (strain ATCC 51907 / DSM 11121 / KW20 / Rd) protein is Ion-translocating oxidoreductase complex subunit D.